The chain runs to 334 residues: Cytoskeleton protein RodZ (334 aa).

Topologically, residues 1–111 (MNTEATHDQN…LGKRRKKRDG (111 aa)) are cytoplasmic. The region spanning 19-71 (LRNAREQLGLSQQAVAERLCLKVSTVRDIEEDKAPSDLASTFLRGYIRSYARL) is the HTH cro/C1-type domain. Residues 30–49 (QQAVAERLCLKVSTVRDIEE) constitute a DNA-binding region (H-T-H motif). A helical; Signal-anchor for type II membrane protein membrane pass occupies residues 112-132 (WLMSFTWLVLFVVVGLTGAWW). Residues 133-334 (WQNHKAQQEE…TLNAEPTPAQ (202 aa)) lie on the Periplasmic side of the membrane. Disordered stretches follow at residues 155–207 (NADK…ATQN) and 221–241 (ATSA…SQAG). Residues 176-207 (TTPAQTAPAPATPVDSTAATQTPAATATATQN) are compositionally biased toward low complexity.

Belongs to the RodZ family.

The protein resides in the cell inner membrane. Functionally, cytoskeletal protein that is involved in cell-shape control through regulation of the length of the long axis. The protein is Cytoskeleton protein RodZ of Salmonella schwarzengrund (strain CVM19633).